The sequence spans 174 residues: Protein RESISTANCE TO POWDERY MILDEW 8.2 (174 aa).

In terms of domain architecture, RPW8 spans 1-153 (MIAEVAAGGA…IMPQPKFEIH (153 aa)). A helical transmembrane segment spans residues 7–23 (AGGALGLALSVLHEAVK). A coiled-coil region spans residues 68-145 (VNKRLKLLLE…EISTKLDKIM (78 aa)).

This sequence belongs to the plant RPW8 protein family.

Its subcellular location is the membrane. Disease resistance (R) protein that induces localized, salicylic acid-dependent defenses. Confers resistance to powdery mildew (e.g. Erysiphe cichoracearum UCSC1). The sequence is that of Protein RESISTANCE TO POWDERY MILDEW 8.2 from Arabidopsis thaliana (Mouse-ear cress).